The chain runs to 364 residues: MQERHTEQDYRALLIADTPIIDVRAPIEFEQGAMPAAINLPLMNNDERAAVGICYKQQGSDAALALGHKLVAGEIRQQRIDAWRAACLQNPHGILCCARGGQRSHIVQRWLHDAGIDYPLVEGGYKALRQTAIQATIELAQKPIVLIGGCTGSGKTLLVQQQPNGVDLEGLARHRGSAFGRTLQPQLSQASFENMLAAEMLKTDAHQDLRLWVLEDESRMIGSNHLPECLRERMTQATIAVVEDPFEIRLERLNEEYFLRMHHDFTHAYGDEQGWQEYCEYLHHGLSAIKRRLGLQRYNELAARLDAALTTQLTTGSTDGHLAWLVPLLEEYYDPMYRYQLEKKAEKVVFRGEWAEVAEWVKAQ.

One can recognise a Rhodanese domain in the interval 14 to 137 (LIADTPIIDV…LRQTAIQATI (124 aa)). The S-selanylcysteine intermediate role is filled by Cys97.

This sequence belongs to the SelU family. As to quaternary structure, monomer.

It catalyses the reaction 5-methylaminomethyl-2-thiouridine(34) in tRNA + selenophosphate + (2E)-geranyl diphosphate + H2O + H(+) = 5-methylaminomethyl-2-selenouridine(34) in tRNA + (2E)-thiogeraniol + phosphate + diphosphate. The catalysed reaction is 5-methylaminomethyl-2-thiouridine(34) in tRNA + (2E)-geranyl diphosphate = 5-methylaminomethyl-S-(2E)-geranyl-thiouridine(34) in tRNA + diphosphate. The enzyme catalyses 5-methylaminomethyl-S-(2E)-geranyl-thiouridine(34) in tRNA + selenophosphate + H(+) = 5-methylaminomethyl-2-(Se-phospho)selenouridine(34) in tRNA + (2E)-thiogeraniol. It carries out the reaction 5-methylaminomethyl-2-(Se-phospho)selenouridine(34) in tRNA + H2O = 5-methylaminomethyl-2-selenouridine(34) in tRNA + phosphate. Involved in the post-transcriptional modification of the uridine at the wobble position (U34) of tRNA(Lys), tRNA(Glu) and tRNA(Gln). Catalyzes the conversion of 2-thiouridine (S2U-RNA) to 2-selenouridine (Se2U-RNA). Acts in a two-step process involving geranylation of 2-thiouridine (S2U) to S-geranyl-2-thiouridine (geS2U) and subsequent selenation of the latter derivative to 2-selenouridine (Se2U) in the tRNA chain. The chain is tRNA 2-selenouridine synthase from Escherichia coli O81 (strain ED1a).